Reading from the N-terminus, the 206-residue chain is Large ribosomal subunit protein uL4 (206 aa).

Residues 48 to 97 (THAVKNRSLVSGGGKKPWKQKHTGRARQGSTRASQWVGGGKAMGPKPRDY) form a disordered region. The segment covering 63–72 (KPWKQKHTGR) has biased composition (basic residues).

The protein belongs to the universal ribosomal protein uL4 family. Part of the 50S ribosomal subunit.

Its function is as follows. One of the primary rRNA binding proteins, this protein initially binds near the 5'-end of the 23S rRNA. It is important during the early stages of 50S assembly. It makes multiple contacts with different domains of the 23S rRNA in the assembled 50S subunit and ribosome. Functionally, forms part of the polypeptide exit tunnel. The protein is Large ribosomal subunit protein uL4 of Anaeromyxobacter dehalogenans (strain 2CP-1 / ATCC BAA-258).